Consider the following 237-residue polypeptide: MTLRTINAKDAASLDRDLMNEGGFSLDQLMELAGLSVSQAVYRVHPPSKGRNVLVACGPGNNGGDGLVAARHLAHYGYKPTVYYPKQGKNELYERLKTQLHNLSVPFTSDFLGSLQTSDLVIDAIFGFSFSGPLRDPFPKVISLMEETQVPVLSVDAPSSWDIEAGPPKEGPGAKFMPQTLISLTAAKPLVKWFKGRHFLGGRFLTKGVVERYGLDIPEYPGVEQIVEVDVNGEGKL.

One can recognise a YjeF N-terminal domain in the interval 11–223 (AASLDRDLMN…GLDIPEYPGV (213 aa)). Residue 61–65 (NNGGD) participates in (6S)-NADPHX binding. 2 residues coordinate K(+): N62 and D123. Residues 127 to 133 (GFSFSGP) and D156 each bind (6S)-NADPHX. S159 contacts K(+).

This sequence belongs to the NnrE/AIBP family. K(+) is required as a cofactor.

Its subcellular location is the cytoplasm. It is found in the mitochondrion. It catalyses the reaction (6R)-NADHX = (6S)-NADHX. The enzyme catalyses (6R)-NADPHX = (6S)-NADPHX. In terms of biological role, catalyzes the epimerization of the S- and R-forms of NAD(P)HX, a damaged form of NAD(P)H that is a result of enzymatic or heat-dependent hydration. This is a prerequisite for the S-specific NAD(P)H-hydrate dehydratase to allow the repair of both epimers of NAD(P)HX. This Ajellomyces capsulatus (strain G186AR / H82 / ATCC MYA-2454 / RMSCC 2432) (Darling's disease fungus) protein is NAD(P)H-hydrate epimerase.